The chain runs to 173 residues: Nuclear transcription factor Y subunit B-8 (173 aa).

The disordered stretch occupies residues 1–30; that stretch reads MAESQAKSPGGCGSHESGGDQSPRSLHVRE. An N-acetylalanine modification is found at Ala2. The DNA-binding element occupies 35–41; sequence LPIANIS. A subunit association domain (SAD) region spans residues 62–73; the sequence is VQECVSEFISFV. Residues 123-173 are disordered; that stretch reads DTKGSAKGGDPNAKKDGQSSQNGQFSQLAHQGPYGNSQAQQHMMVPMPGTD. A compositionally biased stretch (polar residues) spans 140-163; it reads QSSQNGQFSQLAHQGPYGNSQAQQ.

This sequence belongs to the NFYB/HAP3 subunit family. Heterotrimeric transcription factor composed of three components, NF-YA, NF-YB and NF-YC. NF-YB and NF-YC must interact and dimerize for NF-YA association and DNA binding. As to expression, expressed in flowers and mature rosettes.

The protein localises to the nucleus. Its function is as follows. Component of the NF-Y/HAP transcription factor complex. The NF-Y complex stimulates the transcription of various genes by recognizing and binding to a CCAAT motif in promoters. The protein is Nuclear transcription factor Y subunit B-8 (NFYB8) of Arabidopsis thaliana (Mouse-ear cress).